A 929-amino-acid chain; its full sequence is Isoleucine--tRNA ligase (929 aa).

Residues 58–68 (PYANGDIHIGH) carry the 'HIGH' region motif. E563 serves as a coordination point for L-isoleucyl-5'-AMP. The 'KMSKS' region motif lies at 605 to 609 (KMSKS). K608 contributes to the ATP binding site. Zn(2+) is bound by residues C892, C895, C912, and C915.

This sequence belongs to the class-I aminoacyl-tRNA synthetase family. IleS type 1 subfamily. Monomer. Zn(2+) serves as cofactor.

It localises to the cytoplasm. The enzyme catalyses tRNA(Ile) + L-isoleucine + ATP = L-isoleucyl-tRNA(Ile) + AMP + diphosphate. Catalyzes the attachment of isoleucine to tRNA(Ile). As IleRS can inadvertently accommodate and process structurally similar amino acids such as valine, to avoid such errors it has two additional distinct tRNA(Ile)-dependent editing activities. One activity is designated as 'pretransfer' editing and involves the hydrolysis of activated Val-AMP. The other activity is designated 'posttransfer' editing and involves deacylation of mischarged Val-tRNA(Ile). The sequence is that of Isoleucine--tRNA ligase from Neisseria meningitidis serogroup A / serotype 4A (strain DSM 15465 / Z2491).